The sequence spans 475 residues: Ankyrin repeat, SAM and basic leucine zipper domain-containing protein 1 (475 aa).

Residues 1–10 (MAAGALRGLA) are compositionally biased toward low complexity. The interval 1-23 (MAAGALRGLAVAGGGESSESEDD) is disordered. Ser-17, Ser-18, and Ser-20 each carry phosphoserine. 6 ANK repeats span residues 45–74 (EKNE…SVDS), 78–107 (YGWT…NASF), 110–144 (DKQT…DPNV), 148–177 (RLMT…EVNT), 181–210 (NGYT…NKML), and 214–243 (DGKI…PLEG). The SAM domain occupies 272–334 (SYTAFGDLEI…KILSALKELE (63 aa)).

Interacts with DDX4, PIWIL1, RANBP9 and TDRD1.

Its subcellular location is the cytoplasm. Functionally, plays a central role during spermatogenesis by repressing transposable elements and preventing their mobilization, which is essential for the germline integrity. Acts via the piRNA metabolic process, which mediates the repression of transposable elements during meiosis by forming complexes composed of piRNAs and Piwi proteins and governs the methylation and subsequent repression of transposons. Its association with pi-bodies suggests a participation in the primary piRNAs metabolic process. Required prior to the pachytene stage to facilitate the production of multiple types of piRNAs, including those associated with repeats involved in the regulation of retrotransposons. May act by mediating protein-protein interactions during germ cell maturation. The sequence is that of Ankyrin repeat, SAM and basic leucine zipper domain-containing protein 1 (ASZ1) from Otolemur garnettii (Small-eared galago).